Reading from the N-terminus, the 258-residue chain is UPF0246 protein CJA_0191 (258 aa).

The protein belongs to the UPF0246 family.

The sequence is that of UPF0246 protein CJA_0191 from Cellvibrio japonicus (strain Ueda107) (Pseudomonas fluorescens subsp. cellulosa).